A 369-amino-acid polypeptide reads, in one-letter code: Anhydro-N-acetylmuramic acid kinase (369 aa).

12–19 is an ATP binding site; that stretch reads GTSLDGVD.

It belongs to the anhydro-N-acetylmuramic acid kinase family.

It carries out the reaction 1,6-anhydro-N-acetyl-beta-muramate + ATP + H2O = N-acetyl-D-muramate 6-phosphate + ADP + H(+). The protein operates within amino-sugar metabolism; 1,6-anhydro-N-acetylmuramate degradation. It participates in cell wall biogenesis; peptidoglycan recycling. Functionally, catalyzes the specific phosphorylation of 1,6-anhydro-N-acetylmuramic acid (anhMurNAc) with the simultaneous cleavage of the 1,6-anhydro ring, generating MurNAc-6-P. Is required for the utilization of anhMurNAc either imported from the medium or derived from its own cell wall murein, and thus plays a role in cell wall recycling. This is Anhydro-N-acetylmuramic acid kinase from Escherichia coli O139:H28 (strain E24377A / ETEC).